The sequence spans 1838 residues: Collagen alpha-1(V) chain (1838 aa).

A signal peptide spans 1-36; that stretch reads MDVHTRWKAARPGALLLSSPLLLFLLLLWAPPSSRA. Positions 72 to 244 constitute a Laminin G-like domain; sequence DVAYRVSKDA…DYCEHYSPDC (173 aa). Residues 231–443 form a nonhelical region region; the sequence is RAAYDYCEHY…MPANQDTIFE (213 aa). Sulfotyrosine is present on residues Tyr-234, Tyr-236, Tyr-240, Tyr-262, and Tyr-263. Disordered stretches follow at residues 242–545 and 559–1574; these read PDCD…QESQ and GPAG…EVIQ. Acidic residues predominate over residues 258–268; it reads NPDEYYPEGEG. Low complexity-rich tracts occupy residues 335-345, 374-387, 413-428, and 460-469; these read DYDYVPPDDYY, VPTS…TSNP, YDPY…VSPS, and IIEPGMLIEG. The tract at residues 444-558 is interrupted collagenous region; the sequence is GIGGPRGEKG…ILQQARLALR (115 aa). Positions 470-485 are enriched in pro residues; that stretch reads PPGPEGPAGLPGPPGT. Composition is skewed to low complexity over residues 506-523 and 559-570; these read LPGA…LMLP and GPAGPMGLTGRP. Positions 559 to 1570 are triple-helical region; the sequence is GPAGPMGLTG…GLPGPPGPPG (1012 aa). 3 positions are modified to 4-hydroxyproline: Pro-570, Pro-576, and Pro-621. Residue Lys-627 is modified to 5-hydroxylysine. Pro-639 is modified (4-hydroxyproline). The residue at position 642 (Lys-642) is a 5-hydroxylysine. A 4-hydroxyproline mark is found at Pro-648, Pro-654, Pro-657, Pro-675, and Pro-678. A compositionally biased stretch (low complexity) spans 671–686; the sequence is PRGLPGEPGPRGLLGP. 3-hydroxyproline occurs at positions 680 and 686. The span at 687–696 shows a compositional bias: pro residues; the sequence is KGPPGPPGPP. Residues Pro-690, Pro-696, and Pro-705 each carry the 4-hydroxyproline modification. Residue Lys-708 is modified to 5-hydroxylysine. A 4-hydroxyproline mark is found at Pro-717, Pro-720, Pro-726, and Pro-732. Over residues 722-741 the composition is skewed to low complexity; it reads QQGNPGAQGLPGPQGAIGPP. Residue Lys-744 is modified to 5-hydroxylysine. Low complexity predominate over residues 747 to 756; the sequence is LGKPGLPGMP. A 4-hydroxyproline mark is found at Pro-750, Pro-756, Pro-762, Pro-765, and Pro-771. Residue Lys-774 is modified to 5-hydroxylysine. A 4-hydroxyproline mark is found at Pro-780 and Pro-789. 5-hydroxylysine occurs at positions 795, 804, 807, and 810. A 4-hydroxyproline modification is found at Pro-816. 5-hydroxylysine is present on Lys-819. Position 834 is a 4-hydroxyproline (Pro-834). Positions 837–846 are enriched in basic and acidic residues; sequence RGEDGPEGPK. 2 positions are modified to 5-hydroxylysine: Lys-846 and Lys-864. Residues Pro-870, Pro-873, and Pro-876 each carry the 4-hydroxyproline modification. Position 882 is a 5-hydroxylysine (Lys-882). A 4-hydroxyproline mark is found at Pro-888 and Pro-891. Residue Lys-897 is modified to 5-hydroxylysine. 4-hydroxyproline is present on residues Pro-903 and Pro-906. Residues 908-917 show a composition bias toward low complexity; sequence PRGQRGPTGP. Residues Pro-930 and Pro-945 each carry the 4-hydroxyproline modification. Low complexity-rich tracts occupy residues 971-990 and 999-1011; these read KDGL…QGKT and VGPQ…TGPM. Pro-1017, Pro-1020, Pro-1023, and Pro-1029 each carry 4-hydroxyproline. Over residues 1088–1104 the composition is skewed to low complexity; the sequence is SPGERGPAGAAGPIGIP. A compositionally biased stretch (pro residues) spans 1106 to 1115; that stretch reads RPGPQGPPGP. 4-hydroxyproline is present on residues Pro-1221 and Pro-1224. A compositionally biased stretch (low complexity) spans 1259-1268; the sequence is PSGAPGADGP. A compositionally biased stretch (gly residues) spans 1294–1303; that stretch reads GLPGEGGPLG. Composition is skewed to pro residues over residues 1380–1398 and 1454–1469; these read TGEP…PGPA and SPGP…PPGL. Pro-1467 and Pro-1470 each carry 4-hydroxyproline. Over residues 1485–1494 the composition is skewed to low complexity; sequence PGLIGLIGPP. A compositionally biased stretch (pro residues) spans 1526-1541; the sequence is PLGPPGPPGLPGPPGP. Low complexity predominate over residues 1542–1554; it reads KGAKGSSGPTGPK. The nonhelical region stretch occupies residues 1571-1605; sequence EVIQPLPIQASRTRRNIDASQLLDDGAGESYVDYA. 2 positions are modified to sulfotyrosine: Tyr-1601 and Tyr-1604. Residues 1609-1837 enclose the Fibrillar collagen NC1 domain; the sequence is EEIFGSLNSL…GFEVGPACFL (229 aa).

This sequence belongs to the fibrillar collagen family. Trimers of two alpha 1(V) and one alpha 2(V) chains in most tissues and trimers of one alpha 1(V), one alpha 2(V), and one alpha 3(V) chains in placenta. Interacts with CSPG4. Hydroxylation on proline residues within the sequence motif, GXPG, is most likely to be 4-hydroxy as this fits the requirement for 4-hydroxylation in vertebrates. In terms of processing, sulfated on 40% of tyrosines. Widely expressed. Isoform 2 is more highly expressed in liver, kidney and lung.

It is found in the secreted. Its subcellular location is the extracellular space. The protein resides in the extracellular matrix. In terms of biological role, type V collagen is a member of group I collagen (fibrillar forming collagen). It is a minor connective tissue component of nearly ubiquitous distribution. Type V collagen binds to DNA, heparan sulfate, thrombospondin, heparin, and insulin. Transcriptionally activated by CEBPZ, which recognizes a CCAAT-like motif, CAAAT in the COL5A1 promoter. This Mus musculus (Mouse) protein is Collagen alpha-1(V) chain (Col5a1).